A 102-amino-acid polypeptide reads, in one-letter code: Small ribosomal subunit protein uS10 (102 aa).

Positions 30–58 are disordered; the sequence is TGVNLSGPIPLPTKTLEIPTRKSPDGEGT.

It belongs to the universal ribosomal protein uS10 family. In terms of assembly, part of the 30S ribosomal subunit.

Its function is as follows. Involved in the binding of tRNA to the ribosomes. The polypeptide is Small ribosomal subunit protein uS10 (Haloquadratum walsbyi (strain DSM 16790 / HBSQ001)).